The chain runs to 427 residues: 3-isopropylmalate dehydratase large subunit (427 aa).

3 residues coordinate [4Fe-4S] cluster: cysteine 308, cysteine 368, and cysteine 371.

It belongs to the aconitase/IPM isomerase family. LeuC type 2 subfamily. As to quaternary structure, heterodimer of LeuC and LeuD. Requires [4Fe-4S] cluster as cofactor.

The catalysed reaction is (2R,3S)-3-isopropylmalate = (2S)-2-isopropylmalate. Its pathway is amino-acid biosynthesis; L-leucine biosynthesis; L-leucine from 3-methyl-2-oxobutanoate: step 2/4. Catalyzes the isomerization between 2-isopropylmalate and 3-isopropylmalate, via the formation of 2-isopropylmaleate. In Geobacter sulfurreducens (strain ATCC 51573 / DSM 12127 / PCA), this protein is 3-isopropylmalate dehydratase large subunit.